Reading from the N-terminus, the 287-residue chain is MSDINLKIGLAEMLKGGVIMDVVNAEQAEIAQQAGAVAVMALERVPADIRKDGGIARMSDPKLIKEIMSVTSIPVMAKARIGHFVEAQILESLGVDFIDESEVLSPADDLNHIAKDNFKVPFVCGCTNLGEALRRIGEGAALIRTKGEAGTGNIVEAVRQLRQVNKDINYIKGADQSELMAIAKNMQAPYDLVKYVHKNGKLPVPNFSAGGVATPADAALMMQLGAESVFVGSGIFKSADPLKRAKAIVSAVTYYNDPKILAEVSEDLGEPMTGINCDFEKFSQRGW.

Residue Asp21 coordinates D-ribose 5-phosphate. The active-site Schiff-base intermediate with D-ribose 5-phosphate is the Lys78. Residue Gly150 coordinates D-ribose 5-phosphate. D-glyceraldehyde 3-phosphate is bound at residue Arg162. D-ribose 5-phosphate contacts are provided by residues Gly211 and 232–233 (GS).

This sequence belongs to the PdxS/SNZ family. In the presence of PdxT, forms a dodecamer of heterodimers.

The catalysed reaction is aldehydo-D-ribose 5-phosphate + D-glyceraldehyde 3-phosphate + L-glutamine = pyridoxal 5'-phosphate + L-glutamate + phosphate + 3 H2O + H(+). The protein operates within cofactor biosynthesis; pyridoxal 5'-phosphate biosynthesis. Functionally, catalyzes the formation of pyridoxal 5'-phosphate from ribose 5-phosphate (RBP), glyceraldehyde 3-phosphate (G3P) and ammonia. The ammonia is provided by the PdxT subunit. Can also use ribulose 5-phosphate and dihydroxyacetone phosphate as substrates, resulting from enzyme-catalyzed isomerization of RBP and G3P, respectively. The protein is Pyridoxal 5'-phosphate synthase subunit PdxS of Francisella philomiragia subsp. philomiragia (strain ATCC 25017 / CCUG 19701 / FSC 153 / O#319-036).